A 425-amino-acid polypeptide reads, in one-letter code: Pre-mRNA-splicing factor RBM22 (425 aa).

A C3H1-type zinc finger spans residues R159 to P186. The RRM domain occupies T232–S305. Disordered stretches follow at residues R304–P331 and H384–P425. Positions M389–L399 are enriched in pro residues.

Belongs to the SLT11 family. In terms of assembly, component of the pre-catalytic and catalytic spliceosome complexes. Component of the postcatalytic spliceosome P complex.

The protein resides in the nucleus. It is found in the cytoplasm. Functionally, required for pre-mRNA splicing as component of the activated spliceosome. Involved in the first step of pre-mRNA splicing. Binds directly to the internal stem-loop (ISL) domain of the U6 snRNA and to the pre-mRNA intron near the 5' splice site during the activation and catalytic phases of the spliceosome cycle. Required for normal early embryogenesis. This Danio rerio (Zebrafish) protein is Pre-mRNA-splicing factor RBM22 (rbm22).